Consider the following 220-residue polypeptide: UPF0319 protein YccT (220 aa).

Positions 1 to 20 (MKTGALATFLALCLPVTVFA) are cleaved as a signal peptide.

It belongs to the UPF0319 family.

In Salmonella paratyphi A (strain ATCC 9150 / SARB42), this protein is UPF0319 protein YccT.